The primary structure comprises 332 residues: L-lactate dehydrogenase A chain (332 aa).

NAD(+) contacts are provided by residues Gly-29–Lys-57 and Arg-99. Substrate is bound by residues Arg-106, Asn-138, and Arg-169. Asn-138 contributes to the NAD(+) binding site. The active-site Proton acceptor is the His-193. Residue Thr-248 coordinates substrate.

The protein belongs to the LDH/MDH superfamily. LDH family. As to quaternary structure, homotetramer.

Its subcellular location is the cytoplasm. It carries out the reaction (S)-lactate + NAD(+) = pyruvate + NADH + H(+). It participates in fermentation; pyruvate fermentation to lactate; (S)-lactate from pyruvate: step 1/1. Its function is as follows. Interconverts simultaneously and stereospecifically pyruvate and lactate with concomitant interconversion of NADH and NAD(+). This is L-lactate dehydrogenase A chain (ldha) from Eleginops maclovinus (Patagonian blennie).